An 80-amino-acid polypeptide reads, in one-letter code: Defensin-like protein 276 (80 aa).

The N-terminal stretch at 1 to 24 (MSGQKYQLVSLLLIICLLFSQSTA) is a signal peptide. 4 disulfide bridges follow: cysteine 27/cysteine 67, cysteine 33/cysteine 55, cysteine 39/cysteine 65, and cysteine 43/cysteine 66.

The protein belongs to the DEFL family.

It is found in the secreted. This Arabidopsis thaliana (Mouse-ear cress) protein is Defensin-like protein 276.